Here is a 66-residue protein sequence, read N- to C-terminus: Large ribosomal subunit protein bL35 (66 aa).

Belongs to the bacterial ribosomal protein bL35 family.

The sequence is that of Large ribosomal subunit protein bL35 from Hyphomonas neptunium (strain ATCC 15444).